Here is a 153-residue protein sequence, read N- to C-terminus: 6,7-dimethyl-8-ribityllumazine synthase (153 aa).

Residues F21, 55–57 (AFE), and 79–81 (CVI) contribute to the 5-amino-6-(D-ribitylamino)uracil site. Residue 84 to 85 (AT) participates in (2S)-2-hydroxy-3-oxobutyl phosphate binding. H87 (proton donor) is an active-site residue. F112 contacts 5-amino-6-(D-ribitylamino)uracil. Residue R126 coordinates (2S)-2-hydroxy-3-oxobutyl phosphate.

It belongs to the DMRL synthase family. As to quaternary structure, forms an icosahedral capsid composed of 60 subunits, arranged as a dodecamer of pentamers.

It catalyses the reaction (2S)-2-hydroxy-3-oxobutyl phosphate + 5-amino-6-(D-ribitylamino)uracil = 6,7-dimethyl-8-(1-D-ribityl)lumazine + phosphate + 2 H2O + H(+). The protein operates within cofactor biosynthesis; riboflavin biosynthesis; riboflavin from 2-hydroxy-3-oxobutyl phosphate and 5-amino-6-(D-ribitylamino)uracil: step 1/2. Its function is as follows. Catalyzes the formation of 6,7-dimethyl-8-ribityllumazine by condensation of 5-amino-6-(D-ribitylamino)uracil with 3,4-dihydroxy-2-butanone 4-phosphate. This is the penultimate step in the biosynthesis of riboflavin. This is 6,7-dimethyl-8-ribityllumazine synthase from Staphylococcus epidermidis (strain ATCC 35984 / DSM 28319 / BCRC 17069 / CCUG 31568 / BM 3577 / RP62A).